Consider the following 674-residue polypeptide: DNA ligase (674 aa).

NAD(+)-binding positions include aspartate 35–aspartate 39, serine 84–leucine 85, and glutamate 116. The N6-AMP-lysine intermediate role is filled by lysine 118. Residues arginine 139, glutamate 176, lysine 293, and lysine 317 each coordinate NAD(+). Zn(2+) contacts are provided by cysteine 411, cysteine 414, cysteine 429, and cysteine 435. The region spanning aspartate 593–valine 674 is the BRCT domain.

The protein belongs to the NAD-dependent DNA ligase family. LigA subfamily. The cofactor is Mg(2+). Mn(2+) serves as cofactor.

The catalysed reaction is NAD(+) + (deoxyribonucleotide)n-3'-hydroxyl + 5'-phospho-(deoxyribonucleotide)m = (deoxyribonucleotide)n+m + AMP + beta-nicotinamide D-nucleotide.. DNA ligase that catalyzes the formation of phosphodiester linkages between 5'-phosphoryl and 3'-hydroxyl groups in double-stranded DNA using NAD as a coenzyme and as the energy source for the reaction. It is essential for DNA replication and repair of damaged DNA. The sequence is that of DNA ligase from Saccharophagus degradans (strain 2-40 / ATCC 43961 / DSM 17024).